The sequence spans 257 residues: Phosphate import ATP-binding protein PstB (257 aa).

Residues 11-252 (IQVRNLNFYY…PAKKQTEDYI (242 aa)) enclose the ABC transporter domain. Position 43–50 (43–50 (GPSGCGKS)) interacts with ATP.

Belongs to the ABC transporter superfamily. Phosphate importer (TC 3.A.1.7) family. The complex is composed of two ATP-binding proteins (PstB), two transmembrane proteins (PstC and PstA) and a solute-binding protein (PstS).

It is found in the cell inner membrane. The enzyme catalyses phosphate(out) + ATP + H2O = ADP + 2 phosphate(in) + H(+). Functionally, part of the ABC transporter complex PstSACB involved in phosphate import. Responsible for energy coupling to the transport system. The polypeptide is Phosphate import ATP-binding protein PstB (Escherichia coli O6:K15:H31 (strain 536 / UPEC)).